The sequence spans 568 residues: Proline--tRNA ligase (568 aa).

The protein belongs to the class-II aminoacyl-tRNA synthetase family. ProS type 1 subfamily. As to quaternary structure, homodimer.

It localises to the cytoplasm. The catalysed reaction is tRNA(Pro) + L-proline + ATP = L-prolyl-tRNA(Pro) + AMP + diphosphate. Its function is as follows. Catalyzes the attachment of proline to tRNA(Pro) in a two-step reaction: proline is first activated by ATP to form Pro-AMP and then transferred to the acceptor end of tRNA(Pro). As ProRS can inadvertently accommodate and process non-cognate amino acids such as alanine and cysteine, to avoid such errors it has two additional distinct editing activities against alanine. One activity is designated as 'pretransfer' editing and involves the tRNA(Pro)-independent hydrolysis of activated Ala-AMP. The other activity is designated 'posttransfer' editing and involves deacylation of mischarged Ala-tRNA(Pro). The misacylated Cys-tRNA(Pro) is not edited by ProRS. In Listeria welshimeri serovar 6b (strain ATCC 35897 / DSM 20650 / CCUG 15529 / CIP 8149 / NCTC 11857 / SLCC 5334 / V8), this protein is Proline--tRNA ligase.